We begin with the raw amino-acid sequence, 114 residues long: Large ribosomal subunit protein bL20c (114 aa).

The protein belongs to the bacterial ribosomal protein bL20 family.

It localises to the plastid. The protein localises to the chloroplast. In terms of biological role, binds directly to 23S ribosomal RNA and is necessary for the in vitro assembly process of the 50S ribosomal subunit. It is not involved in the protein synthesizing functions of that subunit. In Tetradesmus obliquus (Green alga), this protein is Large ribosomal subunit protein bL20c.